A 226-amino-acid polypeptide reads, in one-letter code: Protein B (226 aa).

Positions 37–100 (DNVQGTDYEK…FSTQHLANKV (64 aa)) are igG constant region-binding. 3 repeats span residues 158-168 (TKSKLDKEIWN), 169-179 (TRFTRDKKVLN), and 180-190 (VKEFKVYNTLN).

The protein localises to the secreted. Protein B belongs to the group of bacterial Fc-binding protein. This is Protein B from Streptococcus agalactiae.